The following is a 329-amino-acid chain: Phospho-N-acetylmuramoyl-pentapeptide-transferase (329 aa).

9 helical membrane-spanning segments follow: residues 1 to 21, 53 to 73, 76 to 96, 109 to 129, 141 to 161, 175 to 195, 198 to 218, 237 to 257, and 309 to 329; these read MLLN…IGIP, MGGF…ALVF, FSPA…IGFL, GLTA…SYFI, ILSW…IWLV, GLAS…AVVH, YDVL…FVFN, FLAI…IGAV, and IVFW…YFAF.

This sequence belongs to the glycosyltransferase 4 family. MraY subfamily. The cofactor is Mg(2+).

The protein resides in the cell membrane. The catalysed reaction is UDP-N-acetyl-alpha-D-muramoyl-L-alanyl-gamma-D-glutamyl-L-lysyl-D-alanyl-D-alanine + di-trans,octa-cis-undecaprenyl phosphate = Mur2Ac(oyl-L-Ala-gamma-D-Glu-L-Lys-D-Ala-D-Ala)-di-trans,octa-cis-undecaprenyl diphosphate + UMP. The protein operates within cell wall biogenesis; peptidoglycan biosynthesis. Catalyzes the initial step of the lipid cycle reactions in the biosynthesis of the cell wall peptidoglycan: transfers peptidoglycan precursor phospho-MurNAc-pentapeptide from UDP-MurNAc-pentapeptide onto the lipid carrier undecaprenyl phosphate, yielding undecaprenyl-pyrophosphoryl-MurNAc-pentapeptide, known as lipid I. This Lactococcus lactis subsp. cremoris (strain MG1363) protein is Phospho-N-acetylmuramoyl-pentapeptide-transferase.